We begin with the raw amino-acid sequence, 519 residues long: Serine/threonine-protein kinase RIO3 (519 aa).

Phosphoserine occurs at positions 8, 112, 125, 127, and 128. Residues 122-159 are disordered; the sequence is FEDSDSSEDEVDWQDTRDDPYRPAKPIPTPKKGFIGKG. Residues 124–134 show a composition bias toward acidic residues; it reads DSDSSEDEVDW. The Protein kinase domain occupies 251 to 519; that stretch reads ETITGCISTG…DGSPPVLSAD (269 aa). ATP-binding positions include 257 to 265 and Lys290; that span reads ISTGKESVV. Asp406 functions as the Proton acceptor in the catalytic mechanism. The residue at position 512 (Ser512) is a Phosphoserine.

This sequence belongs to the protein kinase superfamily. RIO-type Ser/Thr kinase family. In terms of assembly, interacts with CASP10. Interacts with IRF3; RIOK3 probably mediates the interaction of TBK1 with IRF3. Associated with 40S pre-ribosomal particles. It depends on Mg(2+) as a cofactor. Autophosphorylated (in vitro).

It is found in the cytoplasm. It catalyses the reaction L-seryl-[protein] + ATP = O-phospho-L-seryl-[protein] + ADP + H(+). The catalysed reaction is L-threonyl-[protein] + ATP = O-phospho-L-threonyl-[protein] + ADP + H(+). Functionally, involved in regulation of type I interferon (IFN)-dependent immune response which plays a critical role in the innate immune response against DNA and RNA viruses. May act as an adapter protein essential for the recruitment of TBK1 to IRF3. Phosphorylates IFIH1 on 'Ser-828' interfering with IFIH1 filament assembly on long dsRNA and resulting in attenuated IFIH1-signaling. Can inhibit CASP10 isoform 7-mediated activation of the NF-kappaB signaling pathway. May play a role in the biogenesis of the 40S ribosomal subunit. Involved in the processing of 21S pre-rRNA to the mature 18S rRNA. The polypeptide is Serine/threonine-protein kinase RIO3 (Riok3) (Mus musculus (Mouse)).